The chain runs to 350 residues: MRYITAGESHGEALIAVIEGLPSNLLIDEEFINKELKRRQGGYGRGGRMAIEEDKVHVLSGIRNGKTIGSPLTLEIINKDYENWKNKKTPEVTRPRPGHADLAGAIKYNQRDLRNILERSSARETAARVAVGSVAKLLLKELDIYVKSKVLEIGGVKAEEKWRRTIDEAKSKGDTLGGIIEIVIEGVPVGLGSHVQWDRKLDALLAYHVMSVQAIKAVEIGLGFEAARKPGSLVHDEIYYDEERGFYRKTNNAGGIEGGISNGSPIVIKAAMKPIPTLLKPLTSIDINTKEEVKAAYERSDVTAVEAAACVLEAVCAWVIADECLKKFGGDSIEELKKNYDAYLVYVKNF.

NADP(+) contacts are provided by arginine 39 and arginine 45. FMN-binding positions include 119–121 (RSS), 213–214 (QA), glycine 258, 273–277 (KPIPT), and arginine 299.

Belongs to the chorismate synthase family. In terms of assembly, homotetramer. FMNH2 is required as a cofactor.

The catalysed reaction is 5-O-(1-carboxyvinyl)-3-phosphoshikimate = chorismate + phosphate. It participates in metabolic intermediate biosynthesis; chorismate biosynthesis; chorismate from D-erythrose 4-phosphate and phosphoenolpyruvate: step 7/7. In terms of biological role, catalyzes the anti-1,4-elimination of the C-3 phosphate and the C-6 proR hydrogen from 5-enolpyruvylshikimate-3-phosphate (EPSP) to yield chorismate, which is the branch point compound that serves as the starting substrate for the three terminal pathways of aromatic amino acid biosynthesis. This reaction introduces a second double bond into the aromatic ring system. This is Chorismate synthase from Thermoanaerobacter pseudethanolicus (strain ATCC 33223 / 39E) (Clostridium thermohydrosulfuricum).